The chain runs to 229 residues: Ribosome maturation factor RimM (229 aa).

The segment at 1–21 (MAGHDSGNAKRGRSPSFGVFV) is disordered. Residues 148 to 229 (ADEFYWVDLI…RVVVDWEADY (82 aa)) enclose the PRC barrel domain.

Belongs to the RimM family. Binds ribosomal protein uS19.

The protein localises to the cytoplasm. An accessory protein needed during the final step in the assembly of 30S ribosomal subunit, possibly for assembly of the head region. Essential for efficient processing of 16S rRNA. May be needed both before and after RbfA during the maturation of 16S rRNA. It has affinity for free ribosomal 30S subunits but not for 70S ribosomes. This is Ribosome maturation factor RimM from Burkholderia mallei (strain NCTC 10247).